Consider the following 97-residue polypeptide: Type 1 phosphatases regulator YPI2 (97 aa).

The tract at residues 1–97 is disordered; the sequence is MNKKKTKICC…KMMEKKSNNT (97 aa). The span at 43–53 shows a compositional bias: basic and acidic residues; that stretch reads ENDKDLGFDER. Positions 54-65 are enriched in basic residues; the sequence is RKRRVERRRRKL.

Belongs to the YPI1 family.

Its subcellular location is the nucleus. Regulator of type 1 phosphatases which maintains protein phosphatase activity under strict control. This chain is Type 1 phosphatases regulator YPI2 (YPI2), found in Vanderwaltozyma polyspora (strain ATCC 22028 / DSM 70294 / BCRC 21397 / CBS 2163 / NBRC 10782 / NRRL Y-8283 / UCD 57-17) (Kluyveromyces polysporus).